A 118-amino-acid chain; its full sequence is Sarafotoxin-i1 (118 aa).

The first 23 residues, 1-23, serve as a signal peptide directing secretion; it reads MALLPRLAAGGLLLLLALAALDG. Positions 24-84 are excised as a propeptide; sequence KPAPPKLLQK…LSPLRKPQPL (61 aa). 2 cysteine pairs are disulfide-bonded: Cys85/Cys99 and Cys87/Cys95. The propeptide occupies 112 to 118; the sequence is PSPIQSS.

Belongs to the endothelin/sarafotoxin family. Different length molecules ranging from 15 (85-99) to 30 amino acids (85-114) have been found in the venom. Expressed by the venom gland.

The protein resides in the secreted. Its function is as follows. Vasoconstrictor activity. These toxins cause cardiac arrest probably as a result of coronary vasospasm. Functionally, sarafotoxin-i3: vasoconstrictor activity. Causes cardiac arrest probably as a result of coronary vasospasm. Displays low agonistic activities towards endothelin-2 receptor (EDNRB) (displays affinity in the micromolar range). In Atractaspis irregularis (Variable burrowing asp), this protein is Sarafotoxin-i1.